A 387-amino-acid chain; its full sequence is uncharacterized protein (387 aa).

It belongs to the geranylgeranyl reductase family. ChlP subfamily.

This is an uncharacterized protein from Methanocaldococcus jannaschii (strain ATCC 43067 / DSM 2661 / JAL-1 / JCM 10045 / NBRC 100440) (Methanococcus jannaschii).